The primary structure comprises 247 residues: Pyridoxine 5'-phosphate synthase (247 aa).

Asn-7 is a binding site for 3-amino-2-oxopropyl phosphate. 9–10 (DH) is a binding site for 1-deoxy-D-xylulose 5-phosphate. A 3-amino-2-oxopropyl phosphate-binding site is contributed by Arg-18. His-43 serves as the catalytic Proton acceptor. Positions 45 and 50 each coordinate 1-deoxy-D-xylulose 5-phosphate. The active-site Proton acceptor is Glu-70. Thr-100 is a 1-deoxy-D-xylulose 5-phosphate binding site. The active-site Proton donor is His-190. 3-amino-2-oxopropyl phosphate contacts are provided by residues Gly-191 and 212-213 (GH).

The protein belongs to the PNP synthase family. As to quaternary structure, homooctamer; tetramer of dimers.

It localises to the cytoplasm. The enzyme catalyses 3-amino-2-oxopropyl phosphate + 1-deoxy-D-xylulose 5-phosphate = pyridoxine 5'-phosphate + phosphate + 2 H2O + H(+). It participates in cofactor biosynthesis; pyridoxine 5'-phosphate biosynthesis; pyridoxine 5'-phosphate from D-erythrose 4-phosphate: step 5/5. In terms of biological role, catalyzes the complicated ring closure reaction between the two acyclic compounds 1-deoxy-D-xylulose-5-phosphate (DXP) and 3-amino-2-oxopropyl phosphate (1-amino-acetone-3-phosphate or AAP) to form pyridoxine 5'-phosphate (PNP) and inorganic phosphate. This Synechococcus sp. (strain WH7803) protein is Pyridoxine 5'-phosphate synthase.